The sequence spans 208 residues: Large ribosomal subunit protein bL9 (208 aa).

The segment at 161–208 (KKRKIEKEVEEGSGTSVDESLKLDSVSDSIDTSGVNSSDKEEENNIIE) is disordered. A compositionally biased stretch (polar residues) spans 186 to 197 (VSDSIDTSGVNS).

It belongs to the bacterial ribosomal protein bL9 family.

Functionally, binds to the 23S rRNA. The sequence is that of Large ribosomal subunit protein bL9 from Ehrlichia canis (strain Jake).